A 695-amino-acid polypeptide reads, in one-letter code: Protein EARLY FLOWERING 3 (695 aa).

The span at 1–11 (MKRGKDEEKIL) shows a compositional bias: basic and acidic residues. Disordered stretches follow at residues 1-33 (MKRGKDEEKILEPMFPRLHVNDADKGGPRAPPR), 48-75 (RFGDHGTMNSRSNNTSTLVHPGPSSQPC), 136-159 (RSQSHGRTKSGIEKEKHTPMVAPS), 216-283 (EKSA…REYS), and 541-653 (CSSQ…QTTR). Residues 54 to 74 (TMNSRSNNTSTLVHPGPSSQP) show a composition bias toward polar residues. Basic and acidic residues-rich tracts occupy residues 216–226 (EKSASSHDRVN), 234–253 (QESRNRLYRDGGKTRLKDTD), and 260–283 (LATENHSQEGHGSPEDIDNDREYS). The segment at 261-484 (ATENHSQEGH…VMSPSEGLIY (224 aa)) is interaction with ELF3. Composition is skewed to polar residues over residues 551–567 (PNEQMNQFGHPGNLQNT) and 579–588 (APQQQQQPTK). Low complexity-rich tracts occupy residues 598–616 (QGSTGSSPSGPQGISGSKS) and 636–653 (TMTTTTTTTRTTVTQTTR).

As to quaternary structure, interacts specifically with both Pr and Pfr forms of phytochrome B. Interacts with ELF4. May form a homodimer.

It is found in the nucleus. Functionally, may be a transcription factor part of a circadian clock input pathway. Acts within a 'zeitnehmer' feedback loop and is involved in its own circadian regulation. Has no role in regulating circadian clock function in the dark. Part of a corepressor complex consisting of ELF4, ELF3, and LUX involved in the transcriptional regulation of APRR9. The activity of the protein may be decreased in long day conditions due to its interaction with phytochrome B (phyB). Can regulate the initiation of flowering independently of phyB. Also involved in responses to nematode parasitism, like the formation of the nematode feeding structure. This chain is Protein EARLY FLOWERING 3 (ELF3), found in Arabidopsis thaliana (Mouse-ear cress).